We begin with the raw amino-acid sequence, 54 residues long: UPF0391 membrane protein pRL90066 (54 aa).

Helical transmembrane passes span 5-25 and 28-48; these read ALVF…GIAG and ASIA…SLVM.

Belongs to the UPF0391 family.

The protein resides in the cell membrane. In Rhizobium johnstonii (strain DSM 114642 / LMG 32736 / 3841) (Rhizobium leguminosarum bv. viciae), this protein is UPF0391 membrane protein pRL90066.